We begin with the raw amino-acid sequence, 438 residues long: MSETRSVSMPAADAPTVDAPWPVSVLSGKIKGWIDRLGTAWVEGEITQWGGSGGNVYGKLKDLDVDATISFTVWSSVRAKIPADLGQGARVVALVKPNYWVKGGTLTMQVLEMRHVGLGDLLERLERLRQTLRAEGLFDADRKRRLPFLPGCIGLITGKDSDAEKDVLRNAQLRWPSVRFRVVHTAVQGDRAAGEVTRAIGVLDEDPEVDVIVIARGGGDFQNLLVFSDEKLVRTAAACRTPLVSAIGHEADRPLLDDVADLRASTPTDAAKRVVPDVSEELSRVQQARARIGMRLTSQVRGEIDRIEQLRSRPVLSSTAWIVDSRAEELGRYIARSAELAGRVVERGMQQTSELSRQLRTLSPQHVLDRGYAIVQTADGSALRAPADAPDGTGLALRLAAGALGATSTGPTDDIPSSAARLPSSPAPDARPASGAES.

Residues 405-438 form a disordered region; sequence GATSTGPTDDIPSSAARLPSSPAPDARPASGAES.

This sequence belongs to the XseA family. Heterooligomer composed of large and small subunits.

It localises to the cytoplasm. The enzyme catalyses Exonucleolytic cleavage in either 5'- to 3'- or 3'- to 5'-direction to yield nucleoside 5'-phosphates.. Bidirectionally degrades single-stranded DNA into large acid-insoluble oligonucleotides, which are then degraded further into small acid-soluble oligonucleotides. The sequence is that of Exodeoxyribonuclease 7 large subunit from Clavibacter michiganensis subsp. michiganensis (strain NCPPB 382).